Here is an 805-residue protein sequence, read N- to C-terminus: Leucine--tRNA ligase (805 aa).

The short motif at 40-51 (PYPSGSGLHVGH) is the 'HIGH' region element. A 'KMSKS' region motif is present at residues 576 to 580 (KMSKS). An ATP-binding site is contributed by Lys579.

Belongs to the class-I aminoacyl-tRNA synthetase family.

It is found in the cytoplasm. It carries out the reaction tRNA(Leu) + L-leucine + ATP = L-leucyl-tRNA(Leu) + AMP + diphosphate. The sequence is that of Leucine--tRNA ligase from Chlorobium luteolum (strain DSM 273 / BCRC 81028 / 2530) (Pelodictyon luteolum).